The sequence spans 409 residues: Putative competence-damage inducible protein (409 aa).

It belongs to the CinA family.

This chain is Putative competence-damage inducible protein, found in Clostridium botulinum (strain Langeland / NCTC 10281 / Type F).